Here is a 402-residue protein sequence, read N- to C-terminus: 1-deoxy-D-xylulose 5-phosphate reductoisomerase (402 aa).

The NADPH site is built by threonine 21, glycine 22, serine 23, isoleucine 24, glycine 47, asparagine 50, and asparagine 127. Lysine 128 contacts 1-deoxy-D-xylulose 5-phosphate. Glutamate 129 contributes to the NADPH binding site. Aspartate 151 is a Mn(2+) binding site. Residues serine 152, glutamate 153, serine 177, and histidine 200 each coordinate 1-deoxy-D-xylulose 5-phosphate. Glutamate 153 provides a ligand contact to Mn(2+). Glycine 206 contributes to the NADPH binding site. Serine 213, asparagine 218, lysine 219, and glutamate 222 together coordinate 1-deoxy-D-xylulose 5-phosphate. Residue glutamate 222 participates in Mn(2+) binding.

The protein belongs to the DXR family. It depends on Mg(2+) as a cofactor. Mn(2+) is required as a cofactor.

The catalysed reaction is 2-C-methyl-D-erythritol 4-phosphate + NADP(+) = 1-deoxy-D-xylulose 5-phosphate + NADPH + H(+). It functions in the pathway isoprenoid biosynthesis; isopentenyl diphosphate biosynthesis via DXP pathway; isopentenyl diphosphate from 1-deoxy-D-xylulose 5-phosphate: step 1/6. Its function is as follows. Catalyzes the NADPH-dependent rearrangement and reduction of 1-deoxy-D-xylulose-5-phosphate (DXP) to 2-C-methyl-D-erythritol 4-phosphate (MEP). This chain is 1-deoxy-D-xylulose 5-phosphate reductoisomerase, found in Mycobacterium ulcerans (strain Agy99).